Reading from the N-terminus, the 383-residue chain is Transposase InsI for insertion sequence element IS30C (383 aa).

In terms of domain architecture, Integrase catalytic spans 213-379 (VNGTPIHERS…TPKEIIERGV (167 aa)).

The protein belongs to the transposase IS30 family.

In terms of biological role, required for the transposition of the insertion element. The sequence is that of Transposase InsI for insertion sequence element IS30C (insI3) from Escherichia coli (strain K12).